Reading from the N-terminus, the 312-residue chain is Pre-mRNA-splicing factor 38A (312 aa).

The N-terminal protein interaction domain stretch occupies residues 1–179; sequence MANRTVKDAH…VLEETEQLDP (179 aa). Residues 180-312 are disordered; it reads RVSALEEDMD…SHKKSRRGNE (133 aa). Positions 184–201 are enriched in acidic residues; the sequence is LEEDMDDVESSEEEEDED. Over residues 202–223 the composition is skewed to basic and acidic residues; it reads EKGRDPSPEHHRRNYRDLDRPR. Composition is skewed to basic residues over residues 224 to 294 and 301 to 312; these read RSPS…RSHS and KKSHKKSRRGNE.

The protein belongs to the PRP38 family. As to quaternary structure, component of the spliceosome B complex.

It is found in the nucleus. Involved in pre-mRNA splicing as a component of the spliceosome. This is Pre-mRNA-splicing factor 38A (prpf38a) from Xenopus tropicalis (Western clawed frog).